The following is an 843-amino-acid chain: Glycogen phosphorylase, brain form (843 aa).

Residue Ala-2 is modified to N-acetylalanine. Ser-15 is modified (phosphoserine; by PHK; in form phosphorylase A). 3 residues coordinate AMP: Asp-43, Tyr-197, and Arg-310. Tyr-197 carries the phosphotyrosine modification. Tyr-473 carries the post-translational modification Phosphotyrosine. A Phosphoserine modification is found at Ser-524. Residue Lys-569 coordinates pyridoxal 5'-phosphate. The segment at 677–678 (TG) is pyridoxal 5'-phosphate. Residue Lys-681 is modified to N6-(pyridoxal phosphate)lysine.

This sequence belongs to the glycogen phosphorylase family. In terms of assembly, homodimer. Dimers associate into a tetramer to form the enzymatically active phosphorylase A. It depends on pyridoxal 5'-phosphate as a cofactor. In terms of processing, phosphorylation of Ser-15 converts phosphorylase B (unphosphorylated) to phosphorylase A.

It catalyses the reaction [(1-&gt;4)-alpha-D-glucosyl](n) + phosphate = [(1-&gt;4)-alpha-D-glucosyl](n-1) + alpha-D-glucose 1-phosphate. Activity of phosphorylase is controlled both by allosteric means (through the non-covalent binding of metabolites) and by covalent modification. Thus AMP allosterically activates, whereas ATP, ADP, and glucose-6-phosphate allosterically inhibit, phosphorylase B. In terms of biological role, glycogen phosphorylase that regulates glycogen mobilization. Phosphorylase is an important allosteric enzyme in carbohydrate metabolism. Enzymes from different sources differ in their regulatory mechanisms and in their natural substrates. However, all known phosphorylases share catalytic and structural properties. The chain is Glycogen phosphorylase, brain form (Pygb) from Mus musculus (Mouse).